We begin with the raw amino-acid sequence, 688 residues long: Glycine--tRNA ligase beta subunit (688 aa).

The protein belongs to the class-II aminoacyl-tRNA synthetase family. In terms of assembly, tetramer of two alpha and two beta subunits.

The protein localises to the cytoplasm. The catalysed reaction is tRNA(Gly) + glycine + ATP = glycyl-tRNA(Gly) + AMP + diphosphate. The protein is Glycine--tRNA ligase beta subunit of Psychromonas ingrahamii (strain DSM 17664 / CCUG 51855 / 37).